A 111-amino-acid chain; its full sequence is MSKGVITITDAEFESEVLKAEQPVLVYFWASWCGPCQLMSPLINLAANTYSDRLKVVKLEIDPNPTTVKKYKVEGVPALRLVKGEQILDSTEGVISKDKLLSFLDTHLNNN.

Residues 2 to 109 (SKGVITITDA…LLSFLDTHLN (108 aa)) form the Thioredoxin domain. C33 and C36 form a disulfide bridge.

The protein belongs to the thioredoxin family.

Functionally, participates in various redox reactions through the reversible oxidation of its active center dithiol to a disulfide and catalyzes dithiol-disulfide exchange reactions. In Nostoc sp. (strain PCC 7120 / SAG 25.82 / UTEX 2576), this protein is Thioredoxin 2 (trxB).